Here is a 166-residue protein sequence, read N- to C-terminus: Crossover junction endodeoxyribonuclease RuvC (166 aa).

Active-site residues include Asp-7, Glu-67, and Asp-140. Mg(2+)-binding residues include Asp-7, Glu-67, and Asp-140.

This sequence belongs to the RuvC family. Homodimer which binds Holliday junction (HJ) DNA. The HJ becomes 2-fold symmetrical on binding to RuvC with unstacked arms; it has a different conformation from HJ DNA in complex with RuvA. In the full resolvosome a probable DNA-RuvA(4)-RuvB(12)-RuvC(2) complex forms which resolves the HJ. The cofactor is Mg(2+).

It localises to the cytoplasm. The enzyme catalyses Endonucleolytic cleavage at a junction such as a reciprocal single-stranded crossover between two homologous DNA duplexes (Holliday junction).. In terms of biological role, the RuvA-RuvB-RuvC complex processes Holliday junction (HJ) DNA during genetic recombination and DNA repair. Endonuclease that resolves HJ intermediates. Cleaves cruciform DNA by making single-stranded nicks across the HJ at symmetrical positions within the homologous arms, yielding a 5'-phosphate and a 3'-hydroxyl group; requires a central core of homology in the junction. The consensus cleavage sequence is 5'-(A/T)TT(C/G)-3'. Cleavage occurs on the 3'-side of the TT dinucleotide at the point of strand exchange. HJ branch migration catalyzed by RuvA-RuvB allows RuvC to scan DNA until it finds its consensus sequence, where it cleaves and resolves the cruciform DNA. This is Crossover junction endodeoxyribonuclease RuvC from Brevibacillus brevis (strain 47 / JCM 6285 / NBRC 100599).